We begin with the raw amino-acid sequence, 154 residues long: Myoglobin (154 aa).

The Globin domain maps to 2–148; the sequence is GLSDEEWKKV…FRNDMASRYK (147 aa). Histidine 65 provides a ligand contact to nitrite. Histidine 65 contributes to the O2 binding site. Position 94 (histidine 94) interacts with heme b.

It belongs to the globin family. As to quaternary structure, monomeric.

The protein localises to the cytoplasm. Its subcellular location is the sarcoplasm. The enzyme catalyses Fe(III)-heme b-[protein] + nitric oxide + H2O = Fe(II)-heme b-[protein] + nitrite + 2 H(+). It catalyses the reaction H2O2 + AH2 = A + 2 H2O. Monomeric heme protein which primary function is to store oxygen and facilitate its diffusion within muscle tissues. Reversibly binds oxygen through a pentacoordinated heme iron and enables its timely and efficient release as needed during periods of heightened demand. Depending on the oxidative conditions of tissues and cells, and in addition to its ability to bind oxygen, it also has a nitrite reductase activity whereby it regulates the production of bioactive nitric oxide. Under stress conditions, like hypoxia and anoxia, it also protects cells against reactive oxygen species thanks to its pseudoperoxidase activity. This Varanus varius (Lace monitor lizard) protein is Myoglobin (MB).